A 626-amino-acid chain; its full sequence is Chaperone protein DnaK (626 aa).

T175 carries the post-translational modification Phosphothreonine; by autocatalysis. Low complexity predominate over residues 586 to 606 (GAEGAAAGADGAGASAGSASG). A disordered region spans residues 586–626 (GAEGAAAGADGAGASAGSASGSDDDTVEAEVVDDDDDKDNK). Residues 607–626 (SDDDTVEAEVVDDDDDKDNK) show a composition bias toward acidic residues.

The protein belongs to the heat shock protein 70 family.

Functionally, acts as a chaperone. In Bifidobacterium longum (strain DJO10A), this protein is Chaperone protein DnaK.